Reading from the N-terminus, the 319-residue chain is CD2 antigen cytoplasmic tail-binding protein 2 homolog (319 aa).

Disordered regions lie at residues 1–57 (MASK…EDDV) and 105–124 (NAFD…KNEP). Residues 12–24 (KVKEESFKKHTLD) show a composition bias toward basic and acidic residues. Phosphoserine occurs at positions 25 and 30. Positions 25-47 (SDEEDSDDYEREYLNDSDIEGGE) are enriched in acidic residues. Tyr-37 bears the Phosphotyrosine mark. At Ser-41 the chain carries Phosphoserine. Basic and acidic residues predominate over residues 109–124 (PAKDEENSSDEEKNEP). In terms of domain architecture, GYF spans 260–316 (EVTWEFKWSQDETDIQGPFSTEKMLKWSQENYFKNGVYVRKCGENTNFYTSNRIDFD).

The protein resides in the nucleus. Required for embryonic epithelial tissue repair, but not for the assembly of the actomyosin cable at the wound edge. Probably acts downstream of rl in the regulation of Ddc and msn transcription to promote wound healing. This is CD2 antigen cytoplasmic tail-binding protein 2 homolog (holn1) from Drosophila melanogaster (Fruit fly).